Here is a 77-residue protein sequence, read N- to C-terminus: Sec-independent protein translocase protein TatA (77 aa).

The helical transmembrane segment at 1-21 (MGSFSIWHWLVVGILVLLLFG) threads the bilayer. The interval 41 to 77 (KGMSEDDAPTPAPKQIDAQRAPDLSATPTPTAETENR) is disordered. The span at 66 to 77 (ATPTPTAETENR) shows a compositional bias: polar residues.

Belongs to the TatA/E family. The Tat system comprises two distinct complexes: a TatABC complex, containing multiple copies of TatA, TatB and TatC subunits, and a separate TatA complex, containing only TatA subunits. Substrates initially bind to the TatABC complex, which probably triggers association of the separate TatA complex to form the active translocon.

It localises to the cell inner membrane. Functionally, part of the twin-arginine translocation (Tat) system that transports large folded proteins containing a characteristic twin-arginine motif in their signal peptide across membranes. TatA could form the protein-conducting channel of the Tat system. The protein is Sec-independent protein translocase protein TatA of Sphingopyxis alaskensis (strain DSM 13593 / LMG 18877 / RB2256) (Sphingomonas alaskensis).